A 154-amino-acid polypeptide reads, in one-letter code: Prefoldin subunit alpha (154 aa).

Residues 92 to 102 are compositionally biased toward polar residues; the sequence is DNAVESLSTKQ. Residues 92 to 154 are disordered; it reads DNAVESLSTK…MQDQQPEDNE (63 aa). The span at 103 to 114 shows a compositional bias: basic and acidic residues; sequence DALDNRIESLRD. The segment covering 128-148 has biased composition (low complexity); it reads QQAQQMQQQMQQQQMQQMQDQ.

It belongs to the prefoldin subunit alpha family. As to quaternary structure, heterohexamer of two alpha and four beta subunits.

It is found in the cytoplasm. Molecular chaperone capable of stabilizing a range of proteins. Seems to fulfill an ATP-independent, HSP70-like function in archaeal de novo protein folding. The polypeptide is Prefoldin subunit alpha (Haloquadratum walsbyi (strain DSM 16790 / HBSQ001)).